A 167-amino-acid polypeptide reads, in one-letter code: MFQTLDHFLKSWEFEADATQKLLNSLTDESLKQEITSQNWTLGRIAWHTVAAIGIITSNTDLTFQAPAEDYPVPTSAQFIADSYHQASNAFVQALKTQWTDHTLQERINFIGQQMPNGSLLMFLIQHQNHHRGQMTVLMRQAGLTVPGIYGPAKEEWAKFGLEAPKM.

A divalent metal cation is bound by residues histidine 48, histidine 127, and histidine 131.

This sequence belongs to the DinB family.

This is an uncharacterized protein from Bacillus subtilis (strain 168).